The primary structure comprises 384 residues: Cytochrome b (384 aa).

4 helical membrane passes run 32–52 (VGSLLGLCLVIQIASGIFLAM), 76–98 (WLIRYIHANGASFFFICMYLHIG), 113–133 (LWVIGVIIFVVTMATAFMGYC), and 179–199 (FFALHFLLPFILAALVCMHLM). 2 residues coordinate heme b: H82 and H96. Residues H183 and H197 each coordinate heme b. H202 provides a ligand contact to a ubiquinone. A run of 4 helical transmembrane segments spans residues 225-245 (FIFKDLVTVFVFLLVFSLFVF), 289-309 (LGGVIAMFGAILILLTLPYTD), 321-341 (LSKFMFFLFLFNFILLGNLGQ), and 348-368 (YIELGQYATAFYFAYYLLIVP).

It belongs to the cytochrome b family. Fungal cytochrome b-c1 complex contains 10 subunits; 3 respiratory subunits, 2 core proteins and 5 low-molecular weight proteins. Cytochrome b-c1 complex is a homodimer. Heme b serves as cofactor.

Its subcellular location is the mitochondrion inner membrane. Its function is as follows. Component of the ubiquinol-cytochrome c reductase complex (complex III or cytochrome b-c1 complex) that is part of the mitochondrial respiratory chain. The b-c1 complex mediates electron transfer from ubiquinol to cytochrome c. Contributes to the generation of a proton gradient across the mitochondrial membrane that is then used for ATP synthesis. The chain is Cytochrome b (COB) from Candida parapsilosis (Yeast).